Here is a 48-residue protein sequence, read N- to C-terminus: Large ribosomal subunit protein bL34c (48 aa).

The segment at 18-48 is disordered; sequence SGFRSRMATPQGRKTIRNRRKKGRKNLTLRR. Residues 31–48 show a composition bias toward basic residues; it reads KTIRNRRKKGRKNLTLRR.

This sequence belongs to the bacterial ribosomal protein bL34 family.

It is found in the plastid. Its subcellular location is the chloroplast. In Phaeodactylum tricornutum (strain CCAP 1055/1), this protein is Large ribosomal subunit protein bL34c.